We begin with the raw amino-acid sequence, 364 residues long: Mannonate dehydratase (364 aa).

Belongs to the mannonate dehydratase family. Requires Fe(2+) as cofactor. It depends on Mn(2+) as a cofactor.

It carries out the reaction D-mannonate = 2-dehydro-3-deoxy-D-gluconate + H2O. The protein operates within carbohydrate metabolism; pentose and glucuronate interconversion. Functionally, catalyzes the dehydration of D-mannonate. This chain is Mannonate dehydratase, found in Endomicrobium trichonymphae.